The following is a 494-amino-acid chain: Glutamyl-tRNA(Gln) amidotransferase subunit A (494 aa).

Catalysis depends on charge relay system residues lysine 81 and serine 156. Serine 180 functions as the Acyl-ester intermediate in the catalytic mechanism.

This sequence belongs to the amidase family. GatA subfamily. In terms of assembly, heterotrimer of A, B and C subunits.

The catalysed reaction is L-glutamyl-tRNA(Gln) + L-glutamine + ATP + H2O = L-glutaminyl-tRNA(Gln) + L-glutamate + ADP + phosphate + H(+). Allows the formation of correctly charged Gln-tRNA(Gln) through the transamidation of misacylated Glu-tRNA(Gln) in organisms which lack glutaminyl-tRNA synthetase. The reaction takes place in the presence of glutamine and ATP through an activated gamma-phospho-Glu-tRNA(Gln). This chain is Glutamyl-tRNA(Gln) amidotransferase subunit A, found in Mycobacterium tuberculosis (strain ATCC 25177 / H37Ra).